Here is a 304-residue protein sequence, read N- to C-terminus: RNA polymerase II holoenzyme cyclin-like subunit (304 aa).

Positions 43 to 174 (TIHDSKANKQ…LIEELQSYLI (132 aa)) constitute a Cyclin N-terminal domain.

Belongs to the cyclin family. Cyclin C subfamily. Component of the SRB8-11 complex, a regulatory module of the Mediator complex.

It is found in the nucleus. Functionally, component of the SRB8-11 complex. The SRB8-11 complex is a regulatory module of the Mediator complex which is itself involved in regulation of basal and activated RNA polymerase II-dependent transcription. The SRB8-11 complex may be involved in the transcriptional repression of a subset of genes regulated by Mediator. It may inhibit the association of the Mediator complex with RNA polymerase II to form the holoenzyme complex. The SRB8-11 complex phosphorylates the C-terminal domain (CTD) of the largest subunit of RNA polymerase II. The chain is RNA polymerase II holoenzyme cyclin-like subunit (SSN8) from Kluyveromyces lactis (strain ATCC 8585 / CBS 2359 / DSM 70799 / NBRC 1267 / NRRL Y-1140 / WM37) (Yeast).